Here is a 108-residue protein sequence, read N- to C-terminus: Abdominal ganglion neuropeptide R3-14 (108 aa).

The first 23 residues, 1–23, serve as a signal peptide directing secretion; it reads MQVLHLCLAVSIAVALLSQAAWS. 2 positions are modified to pyrrolidone carboxylic acid (Glu); partial: E24 and E52. Residue Q66 is modified to Pyrrolidone carboxylic acid.

The partial formation of pyroglutamate from N-terminal glutamic acid in peptides isolated from single cells is detected by mass spectrometry. There are indications this modification depends on a heat sensitive factor. In terms of tissue distribution, neurons R3-R14. A cluster of 12 giant neurons located on the right side of the abdominal ganglion.

It is found in the secreted. In terms of biological role, HRBP is a myoactive peptide that excites Aplysia heart and enhances gut motility in vitro. The protein is Abdominal ganglion neuropeptide R3-14 of Aplysia californica (California sea hare).